Here is a 335-residue protein sequence, read N- to C-terminus: Glyoxylate reductase (335 aa).

NADP(+)-binding positions include 159–162, 181–183, and 240–242; these read MGRI, SRS, and TGR. Catalysis depends on residues arginine 242 and glutamate 271. The active-site Proton donor is histidine 290. An NADP(+)-binding site is contributed by 290 to 292; that stretch reads HAA.

Belongs to the D-isomer specific 2-hydroxyacid dehydrogenase family. GyaR subfamily. In terms of assembly, homodimer.

The protein resides in the cytoplasm. It catalyses the reaction glycolate + NAD(+) = glyoxylate + NADH + H(+). This Aeropyrum pernix (strain ATCC 700893 / DSM 11879 / JCM 9820 / NBRC 100138 / K1) protein is Glyoxylate reductase.